A 536-amino-acid chain; its full sequence is CTP synthase (536 aa).

Residues 1–267 (MSKFVFVTGG…CKETLNYLEL (267 aa)) are amidoligase domain. Ser-13 contributes to the CTP binding site. Ser-13 serves as a coordination point for UTP. Residues 14–19 (SIGKGI) and Asp-71 contribute to the ATP site. 2 residues coordinate Mg(2+): Asp-71 and Glu-141. Residues 148 to 150 (DIE), 188 to 193 (KTKPTQ), and Lys-224 contribute to the CTP site. Residues 188-193 (KTKPTQ) and Lys-224 contribute to the UTP site. The region spanning 292-534 (KVALVGKYIE…IKASQDKLTQ (243 aa)) is the Glutamine amidotransferase type-1 domain. Gly-354 contacts L-glutamine. The Nucleophile; for glutamine hydrolysis role is filled by Cys-381. L-glutamine is bound by residues 382 to 385 (LGMQ), Glu-405, and Arg-462. Catalysis depends on residues His-507 and Glu-509.

The protein belongs to the CTP synthase family. As to quaternary structure, homotetramer.

It carries out the reaction UTP + L-glutamine + ATP + H2O = CTP + L-glutamate + ADP + phosphate + 2 H(+). It catalyses the reaction L-glutamine + H2O = L-glutamate + NH4(+). The enzyme catalyses UTP + NH4(+) + ATP = CTP + ADP + phosphate + 2 H(+). Its pathway is pyrimidine metabolism; CTP biosynthesis via de novo pathway; CTP from UDP: step 2/2. With respect to regulation, allosterically activated by GTP, when glutamine is the substrate; GTP has no effect on the reaction when ammonia is the substrate. The allosteric effector GTP functions by stabilizing the protein conformation that binds the tetrahedral intermediate(s) formed during glutamine hydrolysis. Inhibited by the product CTP, via allosteric rather than competitive inhibition. In terms of biological role, catalyzes the ATP-dependent amination of UTP to CTP with either L-glutamine or ammonia as the source of nitrogen. Regulates intracellular CTP levels through interactions with the four ribonucleotide triphosphates. This Prochlorococcus marinus (strain MIT 9301) protein is CTP synthase.